Reading from the N-terminus, the 471-residue chain is Coronin-6 (471 aa).

5 WD repeats span residues 79-119 (GHTG…PVRN), 129-169 (GHSK…VLLS), 173-212 (IHPD…VVAE), 216-259 (PHEG…EPVA), and 264-304 (DTSN…PFVH). Residues 410-433 (ILDVRPPASPRRSQSASEAPLSQH) form a disordered region. A compositionally biased stretch (low complexity) spans 419 to 429 (PRRSQSASEAP). A coiled-coil region spans residues 426-468 (SEAPLSQHTLETLLEEIKALRDRVQAQEERITALENMLCELVD).

The polypeptide is Coronin-6 (Coro6) (Mus musculus (Mouse)).